We begin with the raw amino-acid sequence, 188 residues long: Peptidyl-tRNA hydrolase (188 aa).

Residue Tyr14 participates in tRNA binding. His19 (proton acceptor) is an active-site residue. The tRNA site is built by Tyr64, Asn66, and Asn113.

Belongs to the PTH family. In terms of assembly, monomer.

The protein localises to the cytoplasm. The catalysed reaction is an N-acyl-L-alpha-aminoacyl-tRNA + H2O = an N-acyl-L-amino acid + a tRNA + H(+). Functionally, hydrolyzes ribosome-free peptidyl-tRNAs (with 1 or more amino acids incorporated), which drop off the ribosome during protein synthesis, or as a result of ribosome stalling. Catalyzes the release of premature peptidyl moieties from peptidyl-tRNA molecules trapped in stalled 50S ribosomal subunits, and thus maintains levels of free tRNAs and 50S ribosomes. The chain is Peptidyl-tRNA hydrolase from Chloroflexus aggregans (strain MD-66 / DSM 9485).